The following is a 2430-amino-acid chain: Spatacsin (2430 aa).

S1942 and S1943 each carry phosphoserine.

In terms of assembly, interacts with AP5Z1, AP5B1, AP5S1 and ZFYVE26. Ubiquitously expressed at low level. Expressed in embryonic and adult cortical projection neurons.

Its subcellular location is the cytoplasm. The protein localises to the cytosol. It is found in the nucleus. It localises to the cell projection. The protein resides in the axon. Its subcellular location is the dendrite. The protein localises to the synapse. Functionally, may play a role in neurite plasticity by maintaining cytoskeleton stability and regulating synaptic vesicle transport. The protein is Spatacsin (Spg11) of Mus musculus (Mouse).